Consider the following 88-residue polypeptide: Putative membrane protein insertion efficiency factor (88 aa).

This sequence belongs to the UPF0161 family.

Its subcellular location is the cell inner membrane. Could be involved in insertion of integral membrane proteins into the membrane. The chain is Putative membrane protein insertion efficiency factor from Coxiella burnetii (strain Dugway 5J108-111).